Reading from the N-terminus, the 201-residue chain is MAKRVTGPEIEKLIQLLAKVPGLGPRSARRAALHLIKKKDQLLGPLSNAMGEAYDKVKICSRCGNVDTVDPCTVCTDAQRDQSVIIVVEDVSDLWALERAGAMNAAYHVLGGTLSPLDGIGPDDLNIRGLIDRIGEGGIRELIIAVNATVEGQTTAHYITDQLQGLDVKITRLAHGVPVGGELDYLDEGTLAAALRARTVI.

A C4-type zinc finger spans residues 60–75 (CSRCGNVDTVDPCTVC). The 96-residue stretch at 83-178 (SVIIVVEDVS…KITRLAHGVP (96 aa)) folds into the Toprim domain.

The protein belongs to the RecR family.

Its function is as follows. May play a role in DNA repair. It seems to be involved in an RecBC-independent recombinational process of DNA repair. It may act with RecF and RecO. The polypeptide is Recombination protein RecR (Rhizobium etli (strain CIAT 652)).